A 438-amino-acid polypeptide reads, in one-letter code: GTPase Der (438 aa).

EngA-type G domains are found at residues 4-169 (PVVA…PEKG) and 178-353 (IDVA…DQNS). Residues 10 to 17 (GRPNVGKS), 57 to 61 (DTGGI), 120 to 123 (NKVD), 184 to 191 (GKPNVGKS), 231 to 235 (DTAGL), and 296 to 299 (NKWD) each bind GTP. The 85-residue stretch at 354 to 438 (RRVKTGLLNE…PIRLKFKQKT (85 aa)) folds into the KH-like domain.

Belongs to the TRAFAC class TrmE-Era-EngA-EngB-Septin-like GTPase superfamily. EngA (Der) GTPase family. As to quaternary structure, associates with the 50S ribosomal subunit.

GTPase that plays an essential role in the late steps of ribosome biogenesis. This Halothermothrix orenii (strain H 168 / OCM 544 / DSM 9562) protein is GTPase Der.